Consider the following 252-residue polypeptide: 14-3-3-like protein GF14 omicron (252 aa).

Residues serine 65 and serine 188 each carry the phosphoserine modification.

It belongs to the 14-3-3 family.

The protein localises to the nucleus. Its subcellular location is the cytoplasm. Its function is as follows. Is associated with a DNA binding complex that binds to the G box, a well-characterized cis-acting DNA regulatory element found in plant genes. This is 14-3-3-like protein GF14 omicron (GRF11) from Arabidopsis thaliana (Mouse-ear cress).